Consider the following 150-residue polypeptide: UPF0756 membrane protein HD_1071 (150 aa).

4 consecutive transmembrane segments (helical) span residues 1 to 21 (MSLQ…LGVL), 52 to 72 (YGLT…IVSG), 82 to 102 (ILSW…WLGG), and 114 to 134 (IITG…GIPV).

It belongs to the UPF0756 family.

It is found in the cell membrane. The sequence is that of UPF0756 membrane protein HD_1071 from Haemophilus ducreyi (strain 35000HP / ATCC 700724).